A 77-amino-acid chain; its full sequence is NADH dehydrogenase [ubiquinone] 1 alpha subcomplex subunit 3 (77 aa).

A helical membrane pass occupies residues 23 to 45 (IVGGSALALAGIVMATIGVANYY).

Belongs to the complex I NDUFA3 subunit family. As to quaternary structure, complex I is composed of 43 different subunits.

It localises to the mitochondrion inner membrane. It is found in the cytoplasm. Its subcellular location is the myofibril. The protein resides in the sarcomere. The protein localises to the z line. Accessory subunit of the mitochondrial membrane respiratory chain NADH dehydrogenase (Complex I), that is believed not to be involved in catalysis. Complex I functions in the transfer of electrons from NADH to the respiratory chain. The immediate electron acceptor for the enzyme is believed to be ubiquinone. Required for the maintenance of muscle integrity and for cell proliferation in the wing imaginal disc epithelium, possibly by interacting with the chaperone-assisted selective autophagy (CASA) pathway. The sequence is that of NADH dehydrogenase [ubiquinone] 1 alpha subcomplex subunit 3 from Drosophila melanogaster (Fruit fly).